A 280-amino-acid chain; its full sequence is Acyl-[acyl-carrier-protein]--UDP-N-acetylglucosamine O-acyltransferase (280 aa).

This sequence belongs to the transferase hexapeptide repeat family. LpxA subfamily. As to quaternary structure, homotrimer.

It is found in the cytoplasm. The enzyme catalyses a (3R)-hydroxyacyl-[ACP] + UDP-N-acetyl-alpha-D-glucosamine = a UDP-3-O-[(3R)-3-hydroxyacyl]-N-acetyl-alpha-D-glucosamine + holo-[ACP]. It functions in the pathway glycolipid biosynthesis; lipid IV(A) biosynthesis; lipid IV(A) from (3R)-3-hydroxytetradecanoyl-[acyl-carrier-protein] and UDP-N-acetyl-alpha-D-glucosamine: step 1/6. Involved in the biosynthesis of lipid A, a phosphorylated glycolipid that anchors the lipopolysaccharide to the outer membrane of the cell. This chain is Acyl-[acyl-carrier-protein]--UDP-N-acetylglucosamine O-acyltransferase, found in Chlamydia muridarum (strain MoPn / Nigg).